Consider the following 220-residue polypeptide: Guanylate kinase (220 aa).

Residues 11-190 (GVLFVLSSPS…CYGEVMAILR (180 aa)) enclose the Guanylate kinase-like domain. ATP is bound at residue 18-25 (SPSGAGKT).

The protein belongs to the guanylate kinase family.

Its subcellular location is the cytoplasm. The catalysed reaction is GMP + ATP = GDP + ADP. In terms of biological role, essential for recycling GMP and indirectly, cGMP. This chain is Guanylate kinase, found in Sphingopyxis alaskensis (strain DSM 13593 / LMG 18877 / RB2256) (Sphingomonas alaskensis).